Here is a 222-residue protein sequence, read N- to C-terminus: Phosphoglycolate phosphatase (222 aa).

Asp12 functions as the Nucleophile in the catalytic mechanism. Mg(2+) contacts are provided by Asp12, Asp14, and Asp175.

This sequence belongs to the HAD-like hydrolase superfamily. CbbY/CbbZ/Gph/YieH family. Mg(2+) serves as cofactor.

The enzyme catalyses 2-phosphoglycolate + H2O = glycolate + phosphate. It functions in the pathway organic acid metabolism; glycolate biosynthesis; glycolate from 2-phosphoglycolate: step 1/1. In terms of biological role, specifically catalyzes the dephosphorylation of 2-phosphoglycolate. Is involved in the dissimilation of the intracellular 2-phosphoglycolate formed during the DNA repair of 3'-phosphoglycolate ends, a major class of DNA lesions induced by oxidative stress. This is Phosphoglycolate phosphatase from Chromobacterium violaceum (strain ATCC 12472 / DSM 30191 / JCM 1249 / CCUG 213 / NBRC 12614 / NCIMB 9131 / NCTC 9757 / MK).